A 509-amino-acid polypeptide reads, in one-letter code: Protein Jade-1 (509 aa).

Positions 1–45 are disordered; sequence MKRGRLPSSSEDSDDNGSLSTTWSQNSRSQHRRSSCSRPEDRKPS. The tract at residues 60–80 is interaction with KAT7/HBO1 and histones; sequence DSYQLNPDEYYVLADPWRQEW. The tract at residues 80–188 is interaction with histones; it reads WEKGVQVPVS…EQRCYDNMNH (109 aa). Phosphoserine is present on S89. Residue T92 is modified to Phosphothreonine. K114 participates in a covalent cross-link: Glycyl lysine isopeptide (Lys-Gly) (interchain with G-Cter in SUMO2). A PHD-type 1 zinc finger spans residues 203–253; sequence YVVCDVCQSPDGEDGNEMVFCDKCNICVHQACYGILKVPEGSWLCRTCALG. The C2HC pre-PHD-type zinc-finger motif lies at 255 to 289; the sequence is QPKCLLCPKKGGAMKPTRSGTKWVHVSCALWIPEV. Residues 313 to 369 form a PHD-type 2 zinc finger; sequence LVCSLCNEKFGASIQCSVKNCRTAFHVTCAFDRGLEMKTILAENDEVKFKSYCPKHS. The tract at residues 373-399 is disordered; it reads KAEEGLGEGTAQENGAPECSPRDPLEP.

This sequence belongs to the JADE family. As to quaternary structure, component of the HBO1 complex composed at least of ING4 or ING5, KAT7/HBO1, MEAF6, and one of JADE1, JADE2 and JADE3. Interacts with NPHP4.

The protein localises to the nucleus. Its subcellular location is the chromosome. The protein resides in the cytoplasm. It is found in the cytoskeleton. It localises to the cilium basal body. Functionally, scaffold subunit of some HBO1 complexes, which have a histone H4 acetyltransferase activity. Plays a key role in HBO1 complex by directing KAT7/HBO1 specificity towards histone H4 acetylation (H4K5ac, H4K8ac and H4K12ac), regulating DNA replication initiation, regulating DNA replication initiation. May also promote acetylation of nucleosomal histone H4 by KAT5. Promotes apoptosis. May act as a renal tumor suppressor. Negatively regulates canonical Wnt signaling; at least in part, cooperates with NPHP4 in this function. The protein is Protein Jade-1 (JADE1) of Bos taurus (Bovine).